The chain runs to 247 residues: 3-deoxy-manno-octulosonate cytidylyltransferase (247 aa).

The protein belongs to the KdsB family.

It localises to the cytoplasm. It carries out the reaction 3-deoxy-alpha-D-manno-oct-2-ulosonate + CTP = CMP-3-deoxy-beta-D-manno-octulosonate + diphosphate. Its pathway is nucleotide-sugar biosynthesis; CMP-3-deoxy-D-manno-octulosonate biosynthesis; CMP-3-deoxy-D-manno-octulosonate from 3-deoxy-D-manno-octulosonate and CTP: step 1/1. It functions in the pathway bacterial outer membrane biogenesis; lipopolysaccharide biosynthesis. Functionally, activates KDO (a required 8-carbon sugar) for incorporation into bacterial lipopolysaccharide in Gram-negative bacteria. The polypeptide is 3-deoxy-manno-octulosonate cytidylyltransferase (Chlorobium limicola (strain DSM 245 / NBRC 103803 / 6330)).